Here is an 853-residue protein sequence, read N- to C-terminus: DNA mismatch repair protein MutS (853 aa).

614-621 (GPNMGGKS) serves as a coordination point for ATP.

This sequence belongs to the DNA mismatch repair MutS family.

In terms of biological role, this protein is involved in the repair of mismatches in DNA. It is possible that it carries out the mismatch recognition step. This protein has a weak ATPase activity. The protein is DNA mismatch repair protein MutS of Escherichia coli (strain SE11).